A 415-amino-acid polypeptide reads, in one-letter code: NADH-quinone oxidoreductase subunit D (415 aa).

The protein belongs to the complex I 49 kDa subunit family. As to quaternary structure, NDH-1 is composed of 14 different subunits. Subunits NuoB, C, D, E, F, and G constitute the peripheral sector of the complex.

It is found in the cell inner membrane. It catalyses the reaction a quinone + NADH + 5 H(+)(in) = a quinol + NAD(+) + 4 H(+)(out). NDH-1 shuttles electrons from NADH, via FMN and iron-sulfur (Fe-S) centers, to quinones in the respiratory chain. The immediate electron acceptor for the enzyme in this species is believed to be ubiquinone. Couples the redox reaction to proton translocation (for every two electrons transferred, four hydrogen ions are translocated across the cytoplasmic membrane), and thus conserves the redox energy in a proton gradient. In Myxococcus xanthus (strain DK1622), this protein is NADH-quinone oxidoreductase subunit D.